We begin with the raw amino-acid sequence, 828 residues long: Periplasmic nitrate reductase (828 aa).

Positions M1–A31 form a signal peptide, tat-type signal. A 4Fe-4S Mo/W bis-MGD-type domain is found at I39 to D95. Positions 46, 49, 53, and 81 each coordinate [4Fe-4S] cluster. Residues K83, Q150, N175, C179, W212–M219, S243–H247, Q262–D264, M372, Q376, N482, S508–D509, K531, D558, and T718–T727 each bind Mo-bis(molybdopterin guanine dinucleotide). Position 794 (F794) interacts with substrate. Positions 802 and 819 each coordinate Mo-bis(molybdopterin guanine dinucleotide).

The protein belongs to the prokaryotic molybdopterin-containing oxidoreductase family. NasA/NapA/NarB subfamily. As to quaternary structure, component of the periplasmic nitrate reductase NapAB complex composed of NapA and NapB. Requires [4Fe-4S] cluster as cofactor. The cofactor is Mo-bis(molybdopterin guanine dinucleotide). Post-translationally, predicted to be exported by the Tat system. The position of the signal peptide cleavage has not been experimentally proven.

It localises to the periplasm. The catalysed reaction is 2 Fe(II)-[cytochrome] + nitrate + 2 H(+) = 2 Fe(III)-[cytochrome] + nitrite + H2O. Functionally, catalytic subunit of the periplasmic nitrate reductase complex NapAB. Receives electrons from NapB and catalyzes the reduction of nitrate to nitrite. This Escherichia coli O127:H6 (strain E2348/69 / EPEC) protein is Periplasmic nitrate reductase.